The chain runs to 63 residues: Large ribosomal subunit protein uL29 (63 aa).

This sequence belongs to the universal ribosomal protein uL29 family.

In Listeria innocua serovar 6a (strain ATCC BAA-680 / CLIP 11262), this protein is Large ribosomal subunit protein uL29.